The following is a 222-amino-acid chain: Ornithine decarboxylase antizyme 1 (222 aa).

The protein belongs to the ODC antizyme family. As to quaternary structure, interacts with ODC1 and thereby sterically blocks ODC homodimerization. Forms a ternary complex with PSMB4 and OAZ1 before PSMB4 is incorporated into the 20S proteasome. Interacts with AZIN2; this interaction disrupts the interaction between the antizyme and ODC1. Interacts with FAM171A1.

Ornithine decarboxylase (ODC) antizyme protein that negatively regulates ODC activity and intracellular polyamine biosynthesis and uptake in response to increased intracellular polyamine levels. Binds to ODC monomers, inhibiting the assembly of the functional ODC homodimer, and targets the monomers for ubiquitin-independent proteolytic destruction by the 26S proteasome. Triggers ODC degradation by inducing the exposure of a cryptic proteasome-interacting surface of ODC. Stabilizes AZIN2 by interfering with its ubiquitination. Also inhibits cellular uptake of polyamines by inactivating the polyamine uptake transporter. SMAD1/OAZ1/PSMB4 complex mediates the degradation of the CREBBP/EP300 repressor SNIP1. Involved in the translocation of AZIN2 from ER-Golgi intermediate compartment (ERGIC) to the cytosol. The sequence is that of Ornithine decarboxylase antizyme 1 (OAZ1) from Mesocricetus auratus (Golden hamster).